The following is a 153-amino-acid chain: MSNEQTFIAIKPDGVQRGLIGPIISRFENRGFKLVAMKLVSPPQSQLEQHYADLSDKPFFKGLVSYMLSGPICAMVWEGRDVVKTGRTILGATNPLASAPGTIRGDFAIDVGRNVCHGSDSVENAKKEIALWFKPEELISWKSATFDWVYEKA.

Residues Lys11, Phe59, Arg87, Thr93, Arg104, and Asn114 each coordinate ATP. Catalysis depends on His117, which acts as the Pros-phosphohistidine intermediate.

The protein belongs to the NDK family. In terms of assembly, homotrimer. Mg(2+) serves as cofactor.

It catalyses the reaction a 2'-deoxyribonucleoside 5'-diphosphate + ATP = a 2'-deoxyribonucleoside 5'-triphosphate + ADP. The catalysed reaction is a ribonucleoside 5'-diphosphate + ATP = a ribonucleoside 5'-triphosphate + ADP. In terms of biological role, major role in the synthesis of nucleoside triphosphates other than ATP. The ATP gamma phosphate is transferred to the NDP beta phosphate via a ping-pong mechanism, using a phosphorylated active-site intermediate. The sequence is that of Nucleoside diphosphate kinase (ndk1) from Aspergillus fumigatus (strain ATCC MYA-4609 / CBS 101355 / FGSC A1100 / Af293) (Neosartorya fumigata).